The sequence spans 61 residues: Large ribosomal subunit protein eL29 (61 aa).

Residues 1 to 26 show a composition bias toward basic residues; it reads MAKSKNHTNHNQNKKAHRNGIKRPQK. Residues 1–32 form a disordered region; that stretch reads MAKSKNHTNHNQNKKAHRNGIKRPQKHRYDSL.

Belongs to the eukaryotic ribosomal protein eL29 family. As to quaternary structure, component of the large ribosomal subunit (LSU). Mature yeast ribosomes consist of a small (40S) and a large (60S) subunit. The 40S small subunit contains 1 molecule of ribosomal RNA (18S rRNA) and at least 33 different proteins. The large 60S subunit contains 3 rRNA molecules (25S, 5.8S and 5S rRNA) and at least 46 different proteins.

The protein localises to the cytoplasm. Its subcellular location is the nucleus. The protein resides in the nucleolus. In terms of biological role, component of the ribosome, a large ribonucleoprotein complex responsible for the synthesis of proteins in the cell. The small ribosomal subunit (SSU) binds messenger RNAs (mRNAs) and translates the encoded message by selecting cognate aminoacyl-transfer RNA (tRNA) molecules. The large subunit (LSU) contains the ribosomal catalytic site termed the peptidyl transferase center (PTC), which catalyzes the formation of peptide bonds, thereby polymerizing the amino acids delivered by tRNAs into a polypeptide chain. The nascent polypeptides leave the ribosome through a tunnel in the LSU and interact with protein factors that function in enzymatic processing, targeting, and the membrane insertion of nascent chains at the exit of the ribosomal tunnel. The protein is Large ribosomal subunit protein eL29 (rpl29) of Schizosaccharomyces pombe (strain 972 / ATCC 24843) (Fission yeast).